The primary structure comprises 310 residues: Probable manganese-dependent inorganic pyrophosphatase (310 aa).

Positions 9, 13, 15, 76, 98, and 150 each coordinate Mn(2+).

This sequence belongs to the PPase class C family. It depends on Mn(2+) as a cofactor.

Its subcellular location is the cytoplasm. The catalysed reaction is diphosphate + H2O = 2 phosphate + H(+). In Streptococcus thermophilus (strain ATCC BAA-491 / LMD-9), this protein is Probable manganese-dependent inorganic pyrophosphatase.